Here is a 277-residue protein sequence, read N- to C-terminus: Urease accessory protein UreD (277 aa).

It belongs to the UreD family. As to quaternary structure, ureD, UreF and UreG form a complex that acts as a GTP-hydrolysis-dependent molecular chaperone, activating the urease apoprotein by helping to assemble the nickel containing metallocenter of UreC. The UreE protein probably delivers the nickel.

It localises to the cytoplasm. In terms of biological role, required for maturation of urease via the functional incorporation of the urease nickel metallocenter. This is Urease accessory protein UreD from Rhodopseudomonas palustris (strain BisB18).